A 310-amino-acid polypeptide reads, in one-letter code: ADP-L-glycero-D-manno-heptose-6-epimerase (310 aa).

NADP(+) is bound by residues 10–11 (FI), 31–32 (DN), Lys38, Lys53, 75–79 (EGACS), and Asn92. Tyr140 (proton acceptor) is an active-site residue. Lys144 serves as a coordination point for NADP(+). Asn169 provides a ligand contact to substrate. NADP(+) is bound by residues Val170 and Lys178. Catalysis depends on Lys178, which acts as the Proton acceptor. Residues Ser180, His187, 201 to 204 (FEGS), Arg209, and Tyr272 each bind substrate.

This sequence belongs to the NAD(P)-dependent epimerase/dehydratase family. HldD subfamily. Homopentamer. NADP(+) serves as cofactor.

The catalysed reaction is ADP-D-glycero-beta-D-manno-heptose = ADP-L-glycero-beta-D-manno-heptose. The protein operates within nucleotide-sugar biosynthesis; ADP-L-glycero-beta-D-manno-heptose biosynthesis; ADP-L-glycero-beta-D-manno-heptose from D-glycero-beta-D-manno-heptose 7-phosphate: step 4/4. In terms of biological role, catalyzes the interconversion between ADP-D-glycero-beta-D-manno-heptose and ADP-L-glycero-beta-D-manno-heptose via an epimerization at carbon 6 of the heptose. This chain is ADP-L-glycero-D-manno-heptose-6-epimerase, found in Klebsiella pneumoniae subsp. pneumoniae (strain ATCC 700721 / MGH 78578).